The sequence spans 61 residues: Small ribosomal subunit protein bS21 (61 aa).

The tract at residues 40 to 61 (KPSVKRKKKSEAARKRKNKRRF) is disordered. Basic residues predominate over residues 43 to 61 (VKRKKKSEAARKRKNKRRF).

This sequence belongs to the bacterial ribosomal protein bS21 family.

The chain is Small ribosomal subunit protein bS21 from Ligilactobacillus salivarius (strain UCC118) (Lactobacillus salivarius).